The sequence spans 810 residues: Nuclear pore complex protein NUP88 (810 aa).

A disordered region spans residues methionine 1–proline 23. Positions alanine 646–lysine 748 form a coiled coil.

As to quaternary structure, part of the nuclear pore complex (NPC). The NPC has an eight-fold symmetrical structure comprising a central transport channel and two rings, the cytoplasmic and nuclear rings, to which eight filaments are attached. The cytoplasmic filaments have loose ends, while the nuclear filaments are joined in a distal ring, forming a nuclear basket. NPCs are highly dynamic in configuration and composition, and can be devided in 3 subcomplexes, the NUP62 subcomplex, the NUP107-160 subcomplex and the NUP93 subcomplex, containing approximately 30 different nucleoporin proteins.

It is found in the nucleus envelope. The protein localises to the nucleus. The protein resides in the nuclear pore complex. Its function is as follows. Involved in the regulation of exportin-mediated nuclear protein export. Required for resistance mediated by multiple R proteins and for the appropriate nuclear accumulation of SNC1 and of the downstream defense signaling components EDS1 and NPR1. Not involved in salt tolerance, ethylene and auxin responses, but required for systemic acquired resistance. The polypeptide is Nuclear pore complex protein NUP88 (Arabidopsis thaliana (Mouse-ear cress)).